Consider the following 406-residue polypeptide: DNA primase DnaG (406 aa).

Positions 167–253 (DAVVIVEGRA…CVEDLSRRTV (87 aa)) constitute a Toprim domain. Mg(2+)-binding residues include Glu173, Asp215, and Asp217. The interval 259 to 309 (NKTPASAAAPIATTQSETAATDGSATPAPTPEPAPDTAPSPDSDGDDTEAA) is disordered. Low complexity predominate over residues 261-272 (TPASAAAPIATT). Positions 286–296 (APTPEPAPDTA) are enriched in pro residues.

The protein belongs to the archaeal DnaG primase family. Forms a ternary complex with MCM helicase and DNA. Mg(2+) is required as a cofactor.

The catalysed reaction is ssDNA + n NTP = ssDNA/pppN(pN)n-1 hybrid + (n-1) diphosphate.. Functionally, RNA polymerase that catalyzes the synthesis of short RNA molecules used as primers for DNA polymerase during DNA replication. This chain is DNA primase DnaG, found in Halobacterium salinarum (strain ATCC 29341 / DSM 671 / R1).